The sequence spans 262 residues: Phosphatase SCO2771 (262 aa).

Functionally, displays phosphatase activity against p-nitrophenyl phosphate (pNPP) in vitro; however, the physiological substrate is unknown. In Streptomyces coelicolor (strain ATCC BAA-471 / A3(2) / M145), this protein is Phosphatase SCO2771.